The primary structure comprises 152 residues: Aspartate carbamoyltransferase regulatory chain (152 aa).

Positions 108, 113, 136, and 139 each coordinate Zn(2+).

This sequence belongs to the PyrI family. In terms of assembly, contains catalytic and regulatory chains. Zn(2+) serves as cofactor.

Functionally, involved in allosteric regulation of aspartate carbamoyltransferase. This chain is Aspartate carbamoyltransferase regulatory chain, found in Pyrococcus furiosus (strain ATCC 43587 / DSM 3638 / JCM 8422 / Vc1).